A 363-amino-acid polypeptide reads, in one-letter code: tRNA/tmRNA (uracil-C(5))-methyltransferase (363 aa).

Residues glutamine 187, tyrosine 215, asparagine 220, glutamate 236, and aspartate 296 each contribute to the S-adenosyl-L-methionine site. Cysteine 321 (nucleophile) is an active-site residue. The active-site Proton acceptor is glutamate 355.

The protein belongs to the class I-like SAM-binding methyltransferase superfamily. RNA M5U methyltransferase family. TrmA subfamily.

It catalyses the reaction uridine(54) in tRNA + S-adenosyl-L-methionine = 5-methyluridine(54) in tRNA + S-adenosyl-L-homocysteine + H(+). It carries out the reaction uridine(341) in tmRNA + S-adenosyl-L-methionine = 5-methyluridine(341) in tmRNA + S-adenosyl-L-homocysteine + H(+). Dual-specificity methyltransferase that catalyzes the formation of 5-methyluridine at position 54 (m5U54) in all tRNAs, and that of position 341 (m5U341) in tmRNA (transfer-mRNA). This is tRNA/tmRNA (uracil-C(5))-methyltransferase from Pseudomonas fluorescens.